Here is a 662-residue protein sequence, read N- to C-terminus: ATP-dependent RNA helicase DDX3X (662 aa).

The residue at position 2 (serine 2) is an N-acetylserine. Residues serine 2–proline 139 form a required for TBK1 and IKBKE-dependent IFNB1 activation region. The Nuclear export signal signature appears at leucine 12 to leucine 21. Positions leucine 19–glutamate 144 are disordered. Residues leucine 21–serine 34 are compositionally biased toward polar residues. Residues tyrosine 38–arginine 44 are interaction with EIF4E. Basic and acidic residues predominate over residues arginine 44–alanine 68. Lysine 55 carries the N6-acetyllysine modification. The span at serine 70–glycine 89 shows a compositional bias: low complexity. The segment at lysine 81–serine 90 is interaction with VACV protein K7. Phosphoserine occurs at positions 82, 86, and 90. Residues arginine 88 to glycine 123 form an involved in binding to RNA G-quadruplex region. Positions glycine 94–lysine 130 are enriched in basic and acidic residues. The interval glycine 100–arginine 110 is interaction with IKBKE. Positions glycine 100–asparagine 662 are interaction with GSK3B. Arginine 101 bears the Omega-N-methylarginine mark. Serine 102 carries the post-translational modification Phosphoserine; by IKKE. A Phosphotyrosine modification is found at tyrosine 104. Arginine 110 is modified (omega-N-methylarginine). An N6-acetyllysine modification is found at lysine 118. The residue at position 131 (serine 131) is a Phosphoserine. Residues proline 139–glycine 172 form an interaction with CHUK region. The Q motif signature appears at glutamate 180–lysine 208. Serine 181 carries the post-translational modification Phosphoserine; by TBK1; in vitro. Residue serine 183 is modified to Phosphoserine; by TBK1. Tyrosine 200–glutamine 207 contacts ATP. The 193-residue stretch at isoleucine 211 to leucine 403 folds into the Helicase ATP-binding domain. Lysine 215 participates in a covalent cross-link: Glycyl lysine isopeptide (Lys-Gly) (interchain with G-Cter in SUMO2). An ATP-binding site is contributed by alanine 224–threonine 231. Serine 240 is subject to Phosphoserine; by TBK1; in vitro. The interval alanine 250–arginine 259 is involved in stimulation of ATPase activity by DNA and RNA, nucleic acid binding and unwinding and HIV-1 replication. Residue serine 269 is modified to Phosphoserine; by TBK1; in vitro. The DEAD box signature appears at aspartate 347 to aspartate 350. The segment at glycine 409–asparagine 662 is interaction with HCV core protein. The region spanning asparagine 414 to alanine 575 is the Helicase C-terminal domain. Phosphoserine; by CSNK1E and TBK1; in vitro is present on serine 429. Phosphothreonine; by TBK1; in vitro is present on threonine 438. A phosphoserine; by TBK1; in vitro mark is found at serine 442 and serine 456. Threonine 469 is subject to Phosphothreonine; by CSNK1E; in vitro. Residue serine 470 is modified to Phosphoserine; by CSNK1E; in vitro. Phosphoserine; by TBK1; in vitro is present on serine 520. The interaction with NXF1 stretch occupies residues glycine 536–glycine 661. Position 542 is a phosphothreonine; by TBK1; in vitro (threonine 542). Residue serine 543 is modified to Phosphoserine; by CSNK1E and TBK1; in vitro. Arginine 592 carries the omega-N-methylarginine modification. A phosphoserine mark is found at serine 594, serine 605, and serine 612. The segment at aspartate 601–phenylalanine 634 is disordered. Residues glutamine 604 to arginine 622 show a composition bias toward low complexity. Omega-N-methylarginine occurs at positions 617 and 632. Residues serine 623 to phenylalanine 634 show a composition bias toward gly residues.

This sequence belongs to the DEAD box helicase family. DDX3/DED1 subfamily. Homodimer; can bind RNA as a monomer and as a dimer/oligomer. Interacts with TDRD3. Interacts (when phosphorylated at Ser-102) with IRF3; the interaction facilitates the phosphorylation and activation of IRF3 by IKBKE. Directly interacts with XPO1/CRM1. The interaction with XPO1/CMR1 is dependent on the DDX3X nuclear export signal motif and XPO1 interaction with GTPase RAN in its active GTP-bound form. Weakly interacts with TBKBP1/SINTBAD. Directly interacts with TRAF3; this interaction stimulates TRAF3 'Lys-63' ubiquitination. Interacts with CSNK1E in a Wnt-dependent manner; this interaction greatly enhances CSNK1E affinity for ATP, stimulates its kinase activity and promotes CSNK1E-mediated DVL2 phosphorylation. In the presence of RNA, the interaction is decreased. Also interacts with CSNK1D and stimulates its kinase activity. Interacts with TRPV4; this interaction is decreased when the TRPV4 channel is activated, leading to DDX3X relocalization to the nucleus. Interacts with MAP3K14/NIK. Directly interacts with CHUK/IKKA after physiological activation of the TLR7 and TLR8 pathways; this interaction enhances CHUK autophosphorylation. May associate with EIF4F complex, composed of at least EIF4A, EIF4E and EIF4G1/EIF4G3. Directly interacts with EIF4E in an RNA-independent manner; this interaction enhances EIF4E cap-binding ability. Directly interacts with EIF4G1 in an RNA-independent manner. DDX3X competes with EIF4G1 for interaction with EIF4E. Interacts with EIF4A1 and EIF2S1 in an RNA-independent manner. Associates with the eukaryotic translation initiation factor 3 (eIF-3) complex, including with EIF3B and EIF3C subunits. Directly interacts with IKBKE/IKKE; this interaction stimulates IKBKE activating autophosphorylation and is induced upon viral infection. Interacts with TBK1. Interacts with SP1; this interaction potentiates SP1-induced CDKN1A/WAF1/CIP1 transcription. Interacts with GSK3A and GSK3B. Interacts with several death receptors, inclusing FAS, TNFRSF10A and TNFRSF10B. Recruited to TNFRSF10B in the absence of receptor stimulation. When TNFRSF10B is stimulated, further recruited to the receptor and cleaved by caspases. A large proteolytic fragment remains associated with TNFRSF10B. Interacts (via C-terminus) with NXF1/TAP; this interaction may be partly involved in DDX3X nuclear export and in NXF1 localization to stress granules. Identified in an mRNP complex, composed of at least DHX9, DDX3X, ELAVL1, HNRNPU, IGF2BP1/2, ILF3, PABPC1, PCBP2, PTBP2, STAU1, STAU2, SYNCRIP and YBX1. The interaction with IGF2BP1/2 is RNA-dependent. Directly interacts with PABPC1/PABP1 in an RNA-independent manner. This interaction increases in stressed cells and decreases during cell recovery. Interacts (via C-terminus) with MAVS/IPS-1; this interaction occurs rapidly, but transiently after Sendai virus infection. The interaction potentiates MAVS-mediated IFNB induction. Interacts with ERCC6/CBS. Interacts with DHX33 in an RNA-independent manner. Interacts with DDX5 in the cytoplasm; this interaction may be more efficient when both proteins are unphosphorylated. Interacts with RIGI/RIG-1. Interacts with IFIH1/MDA5. Interacts with NCAPH; this interaction may be important for the NCAPH localization at condensing chromosomes during mitosis. Interacts with NLRP3 (via NACHT domain) under inflammasome-activating conditions. Interacts with CAPRIN1. Interacts with HNF4A and NR0B2/SHP in an RNA-independent manner; this interaction disrupts the interaction between HNF4 and NR0B2 that forms inactive heterodimers and enhances the formation of active HNF4 homodimers. Interacts with CREBBP/CBP. Interacts with EP300/p300. Interacts with gamma-tubulin. Interacts with phosphorylated TP53. Directly interacts with RELA/p65; this interaction may trap RELA in the cytoplasm, impairing nuclear relocalization upon TNF activating signals. In terms of assembly, (Microbial infection) Interacts with hepatitis B virus (HBV) polymerase in the cytoplasm; this interaction may inhibit DDX3X interaction with the IKBKE/TBK1 complex, and hence impair IKBKE/TBK1-mediated increase in IFNB production. As to quaternary structure, (Microbial infection) Directly interacts with hepatitis C virus (HCV) core protein in the cytoplasm. (Microbial infection) Interacts with vaccinia virus (VACV) protein K7. In terms of assembly, (Microbial infection) Interacts with HIV-1 protein Rev. As to quaternary structure, (Microbial infection) Interacts with Venezuelan equine encephalitis virus non-structural protein 3. In terms of processing, phosphorylated by TBK1; the phosphorylation is required for the synergistic induction of IFNB mediated by TBK1 and DDX3X. Phosphorylated by IKBKE at Ser-102 after ssRNA viral infection; enhances the induction of INFB promoter by IRF3. The cytoplasmic form is highly phosphorylated in the G1/S phase of the cell cycle and much less at G2/M. Phosphorylation by CSNK1E may inhibit RNA-stimulated ATPase activity. Upon stimulation of death receptors, including TNFRSF10B, recruited to receptors and cleaved by caspases. Proteolytic fragments remain associated with the receptors. This cleavage presumably inactivates DDX3X anti-apoptotic function. Post-translationally, ubiquitinated by RNF39 via 'Lys-48'-linked ubiquitination; leading to proteasomal degradation. Widely expressed. In testis, expressed in spermatids. Expressed in epidermis and liver (at protein level).

Its subcellular location is the cell membrane. It is found in the nucleus. The protein localises to the cytoplasm. It localises to the stress granule. The protein resides in the inflammasome. Its subcellular location is the cell projection. It is found in the lamellipodium. The protein localises to the cytoskeleton. It localises to the microtubule organizing center. The protein resides in the centrosome. It carries out the reaction ATP + H2O = ADP + phosphate + H(+). Functionally, multifunctional ATP-dependent RNA helicase. The ATPase activity can be stimulated by various ribo-and deoxynucleic acids indicative for a relaxed substrate specificity. In vitro can unwind partially double-stranded DNA with a preference for 5'-single-stranded DNA overhangs. Binds RNA G-quadruplex (rG4s) structures, including those located in the 5'-UTR of NRAS mRNA. Involved in many cellular processes, which do not necessarily require its ATPase/helicase catalytic activities. Involved in transcription regulation. Positively regulates CDKN1A/WAF1/CIP1 transcription in an SP1-dependent manner, hence inhibits cell growth. This function requires its ATPase, but not helicase activity. CDKN1A up-regulation may be cell-type specific. Binds CDH1/E-cadherin promoter and represses its transcription. Potentiates HNF4A-mediated MTTP transcriptional activation; this function requires ATPase, but not helicase activity. Facilitates HNF4A acetylation, possibly catalyzed by CREBBP/EP300, thereby increasing the DNA-binding affinity of HNF4 to its response element. In addition, disrupts the interaction between HNF4 and SHP that forms inactive heterodimers and enhances the formation of active HNF4 homodimers. By promoting HNF4A-induced MTTP expression, may play a role in lipid homeostasis. May positively regulate TP53 transcription. Associates with mRNPs, predominantly with spliced mRNAs carrying an exon junction complex (EJC). Involved in the regulation of translation initiation. Not involved in the general process of translation, but promotes efficient translation of selected complex mRNAs, containing highly structured 5'-untranslated regions (UTR). This function depends on helicase activity. Might facilitate translation by resolving secondary structures of 5'-UTRs during ribosome scanning. Alternatively, may act prior to 43S ribosomal scanning and promote 43S pre-initiation complex entry to mRNAs exhibiting specific RNA motifs, by performing local remodeling of transcript structures located close to the cap moiety. Independently of its ATPase activity, promotes the assembly of functional 80S ribosomes and disassembles from ribosomes prior to the translation elongation process. Positively regulates the translation of cyclin E1/CCNE1 mRNA and consequently promotes G1/S-phase transition during the cell cycle. May activate TP53 translation. Required for endoplasmic reticulum stress-induced ATF4 mRNA translation. Independently of its ATPase/helicase activity, enhances IRES-mediated translation; this activity requires interaction with EIF4E. Independently of its ATPase/helicase activity, has also been shown specifically repress cap-dependent translation, possibly by acting on translation initiation factor EIF4E. Involved in innate immunity, acting as a viral RNA sensor. Binds viral RNAs and promotes the production of type I interferon (IFN-alpha and IFN-beta). Potentiate MAVS/RIGI-mediated induction of IFNB in early stages of infection. Enhances IFNB1 expression via IRF3/IRF7 pathway and participates in NFKB activation in the presence of MAVS and TBK1. Involved in TBK1 and IKBKE-dependent IRF3 activation leading to IFNB induction, acts as a scaffolding adapter that links IKBKE and IRF3 and coordinates their activation. Involved in the TLR7/TLR8 signaling pathway leading to type I interferon induction, including IFNA4 production. In this context, acts as an upstream regulator of IRF7 activation by MAP3K14/NIK and CHUK/IKKA. Stimulates CHUK autophosphorylation and activation following physiological activation of the TLR7 and TLR8 pathways, leading to MAP3K14/CHUK-mediated activatory phosphorylation of IRF7. Also stimulates MAP3K14/CHUK-dependent NF-kappa-B signaling. Negatively regulates TNF-induced IL6 and IL8 expression, via the NF-kappa-B pathway. May act by interacting with RELA/p65 and trapping it in the cytoplasm. May also bind IFNB promoter; the function is independent of IRF3. Involved in both stress and inflammatory responses. Independently of its ATPase/helicase activity, required for efficient stress granule assembly through its interaction with EIF4E, hence promotes survival in stressed cells. Independently of its helicase activity, regulates NLRP3 inflammasome assembly through interaction with NLRP3 and hence promotes cell death by pyroptosis during inflammation. This function is independent of helicase activity. Therefore DDX3X availability may be used to interpret stress signals and choose between pro-survival stress granules and pyroptotic NLRP3 inflammasomes and serve as a live-or-die checkpoint in stressed cells. In association with GSK3A/B, negatively regulates extrinsic apoptotic signaling pathway via death domain receptors, including TNFRSF10B, slowing down the rate of CASP3 activation following death receptor stimulation. Cleavage by caspases may inactivate DDX3X and relieve the inhibition. Independently of its ATPase/helicase activity, allosteric activator of CSNK1E. Stimulates CSNK1E-mediated phosphorylation of DVL2, thereby involved in the positive regulation of Wnt/beta-catenin signaling pathway. Also activates CSNK1A1 and CSNK1D in vitro, but it is uncertain if these targets are physiologically relevant. ATPase and casein kinase-activating functions are mutually exclusive. May be involved in mitotic chromosome segregation. (Microbial infection) Facilitates hepatitis C virus (HCV) replication. During infection, HCV core protein inhibits the interaction between MAVS and DDX3X and therefore impairs MAVS-dependent INFB induction and might recruit DDX3X to HCV replication complex. In terms of biological role, (Microbial infection) Facilitates HIV-1 replication. Acts as a cofactor for XPO1-mediated nuclear export of HIV-1 Rev RNAs. This function is strongly stimulated in the presence of TBK1 and requires DDX3X ATPase activity. Its function is as follows. (Microbial infection) Facilitates Zika virus (ZIKV) replication. Functionally, (Microbial infection) Facilitates Dengue virus (DENV) replication. (Microbial infection) Facilitates Venezuelan equine encephalitis virus (VEEV) replication. The sequence is that of ATP-dependent RNA helicase DDX3X (DDX3X) from Homo sapiens (Human).